The primary structure comprises 121 residues: DNA-directed RNA polymerase subunit omega (121 aa).

The protein belongs to the RNA polymerase subunit omega family. The RNAP catalytic core consists of 2 alpha, 1 beta, 1 beta' and 1 omega subunit. When a sigma factor is associated with the core the holoenzyme is formed, which can initiate transcription.

It catalyses the reaction RNA(n) + a ribonucleoside 5'-triphosphate = RNA(n+1) + diphosphate. Functionally, promotes RNA polymerase assembly. Latches the N- and C-terminal regions of the beta' subunit thereby facilitating its interaction with the beta and alpha subunits. The protein is DNA-directed RNA polymerase subunit omega of Syntrophobacter fumaroxidans (strain DSM 10017 / MPOB).